The chain runs to 148 residues: Probable histone H2A.1 (148 aa).

Over residues 1 to 23 the composition is skewed to basic residues; that stretch reads MDASTKTKKGAGGRKGGPRKKSV. Disordered regions lie at residues 1–28 and 127–148; these read MDASTKTKKGAGGRKGGPRKKSVTRSTR and KNEKAATTTKSPSKATKSPKKA. Over residues 131–142 the composition is skewed to low complexity; the sequence is AATTTKSPSKAT. 2 short sequence motifs (SPKK motif) span residues 137–140 and 144–147; these read SPSK and SPKK.

This sequence belongs to the histone H2A family. In terms of assembly, the nucleosome is a histone octamer containing two molecules each of H2A, H2B, H3 and H4 assembled in one H3-H4 heterotetramer and two H2A-H2B heterodimers. The octamer wraps approximately 147 bp of DNA.

The protein resides in the nucleus. Its subcellular location is the chromosome. Core component of nucleosome. Nucleosomes wrap and compact DNA into chromatin, limiting DNA accessibility to the cellular machineries which require DNA as a template. Histones thereby play a central role in transcription regulation, DNA repair, DNA replication and chromosomal stability. DNA accessibility is regulated via a complex set of post-translational modifications of histones, also called histone code, and nucleosome remodeling. This is Probable histone H2A.1 from Medicago truncatula (Barrel medic).